The primary structure comprises 148 residues: Zinc finger X-chromosomal protein (148 aa).

C2H2-type zinc fingers lie at residues 16–38 (IECD…KMVH) and 76–98 (HICV…MRIH).

Belongs to the krueppel C2H2-type zinc-finger protein family. ZFX/ZFY subfamily.

The protein resides in the nucleus. Probable transcriptional activator. This Sus scrofa (Pig) protein is Zinc finger X-chromosomal protein (ZFX).